Reading from the N-terminus, the 444-residue chain is C4-dicarboxylate transport protein (444 aa).

9 helical membrane passes run 21 to 41 (HLYVQVLVAIAAGILLGHFYP), 57 to 77 (LVKMIIAPVIFLTVATGIAGM), 92 to 112 (IYFLTFSTLALIIGLIVANVV), 161 to 181 (GDILQVLFFSVLFGIALALVG), 201 to 221 (LVSILMKAAPIGAFGAMAFTI), 234 to 254 (LLIGTFYLTALLFVLVVLGAV), 320 to 340 (IYMTLAALFIAQATDIPLSLS), 345 to 365 (LLLVAMLSSKGAAGITGAGFI), and 368 to 388 (AATLSVVPAVPVAGMALILGI).

It belongs to the dicarboxylate/amino acid:cation symporter (DAACS) (TC 2.A.23) family.

It localises to the cell inner membrane. In terms of biological role, responsible for the transport of dicarboxylates such as succinate, fumarate, and malate from the periplasm across the membrane. This Brucella anthropi (strain ATCC 49188 / DSM 6882 / CCUG 24695 / JCM 21032 / LMG 3331 / NBRC 15819 / NCTC 12168 / Alc 37) (Ochrobactrum anthropi) protein is C4-dicarboxylate transport protein.